A 161-amino-acid chain; its full sequence is Transcription antitermination protein NusB (161 aa).

This sequence belongs to the NusB family.

Functionally, involved in transcription antitermination. Required for transcription of ribosomal RNA (rRNA) genes. Binds specifically to the boxA antiterminator sequence of the ribosomal RNA (rrn) operons. The sequence is that of Transcription antitermination protein NusB from Syntrophus aciditrophicus (strain SB).